The following is a 436-amino-acid chain: Enolase (436 aa).

Residues His-159 and Glu-168 each coordinate substrate. Catalysis depends on Glu-211, which acts as the Proton donor. Residues Asp-246, Glu-295, and Asp-322 each contribute to the Mg(2+) site. Substrate-binding residues include Glu-295 and Asp-322. Lys-347 acts as the Proton acceptor in catalysis. Substrate contacts are provided by residues 374–377 and Lys-398; that span reads SHRS.

The protein belongs to the enolase family. In terms of assembly, homodimer. It depends on Mg(2+) as a cofactor.

It is found in the cytoplasm. It carries out the reaction (2R)-2-phosphoglycerate = phosphoenolpyruvate + H2O. The protein operates within carbohydrate degradation; glycolysis; pyruvate from D-glyceraldehyde 3-phosphate: step 4/5. This Neocallimastix frontalis (Rumen fungus) protein is Enolase.